The chain runs to 731 residues: 1,4-alpha-glucan branching enzyme GlgB (731 aa).

D411 acts as the Nucleophile in catalysis. Residue E464 is the Proton donor of the active site.

Belongs to the glycosyl hydrolase 13 family. GlgB subfamily. In terms of assembly, monomer.

The catalysed reaction is Transfers a segment of a (1-&gt;4)-alpha-D-glucan chain to a primary hydroxy group in a similar glucan chain.. It participates in glycan biosynthesis; glycogen biosynthesis. Functionally, catalyzes the formation of the alpha-1,6-glucosidic linkages in glycogen by scission of a 1,4-alpha-linked oligosaccharide from growing alpha-1,4-glucan chains and the subsequent attachment of the oligosaccharide to the alpha-1,6 position. In Mycobacterium ulcerans (strain Agy99), this protein is 1,4-alpha-glucan branching enzyme GlgB.